The primary structure comprises 198 residues: Peptidyl-tRNA hydrolase (198 aa).

Residue Tyr-18 participates in tRNA binding. Catalysis depends on His-23, which acts as the Proton acceptor. TRNA-binding residues include Tyr-69, Asn-71, and Asn-117.

Belongs to the PTH family. Monomer.

It is found in the cytoplasm. The enzyme catalyses an N-acyl-L-alpha-aminoacyl-tRNA + H2O = an N-acyl-L-amino acid + a tRNA + H(+). Hydrolyzes ribosome-free peptidyl-tRNAs (with 1 or more amino acids incorporated), which drop off the ribosome during protein synthesis, or as a result of ribosome stalling. Its function is as follows. Catalyzes the release of premature peptidyl moieties from peptidyl-tRNA molecules trapped in stalled 50S ribosomal subunits, and thus maintains levels of free tRNAs and 50S ribosomes. This chain is Peptidyl-tRNA hydrolase, found in Aeromonas hydrophila subsp. hydrophila (strain ATCC 7966 / DSM 30187 / BCRC 13018 / CCUG 14551 / JCM 1027 / KCTC 2358 / NCIMB 9240 / NCTC 8049).